We begin with the raw amino-acid sequence, 259 residues long: MGKKDKRWVLQRKKDPYYNLAKRKNYRSRATYKLFQLNEKFNIIKEKNVVVDLGCAPGGWLQAARDMTGEEGFIVGIDLQQIKPLPYENVIAVKGDMTDEETLKKIQDILPEKPDVIICDASPNISGVWDVDHTRSLELTTMALMTATKMLKKGGNFVVKVFQGDLFYKYVELVSEYFDKAFTTKPRASREESAEVYVIAKHYNGKKFNMKSKSDIVKLLKPQDELKREESALSLRKNISDEDTGMIIKKIKQLRAKKD.

Positions 58, 60, 78, 96, and 120 each coordinate S-adenosyl-L-methionine. Lysine 160 acts as the Proton acceptor in catalysis.

It belongs to the class I-like SAM-binding methyltransferase superfamily. RNA methyltransferase RlmE family.

The protein resides in the cytoplasm. The catalysed reaction is uridine(2552) in 23S rRNA + S-adenosyl-L-methionine = 2'-O-methyluridine(2552) in 23S rRNA + S-adenosyl-L-homocysteine + H(+). Functionally, specifically methylates the uridine in position 2552 of 23S rRNA at the 2'-O position of the ribose in the fully assembled 50S ribosomal subunit. This chain is Ribosomal RNA large subunit methyltransferase E, found in Methanococcus vannielii (strain ATCC 35089 / DSM 1224 / JCM 13029 / OCM 148 / SB).